Here is an 854-residue protein sequence, read N- to C-terminus: pH-response regulator protein palA/prr-1 (854 aa).

The BRO1 domain occupies 5–402 (HVLSLPFRKS…SELESMTSQL (398 aa)). Residues 632–699 (RLDRLYESEL…DAAYYKYKEI (68 aa)) adopt a coiled-coil conformation. 2 disordered regions span residues 739-782 (EEEI…EPIQ) and 801-854 (PQQQ…IRFG). Residues 746–759 (PLSSLNMHQSSFSY) are compositionally biased toward polar residues. Over residues 767 to 782 (QPPPPPPQIPFPEPIQ) the composition is skewed to pro residues. Low complexity predominate over residues 827–839 (QGQQHQQEQGQPG).

This sequence belongs to the palA/RIM20 family. As to quaternary structure, interacts with pacc-1 by binding to its two YPX[LI] motifs.

Its function is as follows. Required for the proteolytic cleavage of the transcription factor pacc-1 in response to alkaline ambient pH. May act as a scaffold protein that recruits the calpain-like protease palB/cpr-8 via snf7/vps-3 to its substrate pacc-1. The protein is pH-response regulator protein palA/prr-1 (prr-1) of Neurospora crassa (strain ATCC 24698 / 74-OR23-1A / CBS 708.71 / DSM 1257 / FGSC 987).